A 265-amino-acid polypeptide reads, in one-letter code: MSDSIKIKAIDEVKISRYIIKQTMEDWMNFVENDVVIVGAGPAGMSAAYYLAKHGLKTLVFERRLSFGGGIGGGAMLFHKLVIESPADEVLKEMNIRLEKVEDGVYIVDSAEFMAKLAASAIDAGAKIIHGVTVDDVIFRENPLRVAGVAVEWTATQMAGLHVDPVFISAKAVVDATGHDAEVVAVASRKIPELGIVIPGERSAYSEMAEKLTVEQTGVVAPGLYVAGMSVTEVRGLPRMGPIFGSMVLSGKKVAEDIIKDLRNS.

NAD(+) is bound by residues alanine 43, 62–63 (ER), glycine 70, valine 134, and 162–164 (HVD). Residues aspartate 164 and histidine 179 each coordinate Fe cation. Residue methionine 229 coordinates NAD(+). A glycine-binding site is contributed by arginine 239.

This sequence belongs to the THI4 family. In terms of assembly, homooctamer; tetramer of dimers. It depends on Fe(2+) as a cofactor.

The catalysed reaction is hydrogen sulfide + glycine + NAD(+) = ADP-5-ethyl-4-methylthiazole-2-carboxylate + nicotinamide + 3 H2O + H(+). It functions in the pathway cofactor biosynthesis; thiamine diphosphate biosynthesis. Involved in the biosynthesis of the thiazole moiety of thiamine. Catalyzes the conversion of NAD and glycine to adenosine diphosphate 5-(2-hydroxyethyl)-4-methylthiazole-2-carboxylate (ADT), an adenylated thiazole intermediate, using free sulfide as a source of sulfur. This Sulfolobus acidocaldarius (strain ATCC 33909 / DSM 639 / JCM 8929 / NBRC 15157 / NCIMB 11770) protein is Thiamine thiazole synthase.